The primary structure comprises 269 residues: Lysyl endopeptidase (269 aa).

Cystine bridges form between cysteine 6–cysteine 216, cysteine 12–cysteine 80, and cysteine 36–cysteine 58. Catalysis depends on charge relay system residues histidine 57, aspartate 113, and serine 194.

The protein belongs to the peptidase S1 family.

It is found in the secreted. It catalyses the reaction Preferential cleavage: Lys-|-Xaa, including Lys-|-Pro.. Its function is as follows. Highly specific endopeptidase that hydrolyzes lysyl bonds including the Lys-Pro bond. The chain is Lysyl endopeptidase from Lysobacter enzymogenes.